Consider the following 346-residue polypeptide: Anthranilate phosphoribosyltransferase (346 aa).

5-phospho-alpha-D-ribose 1-diphosphate contacts are provided by residues glycine 81, 84–85 (GD), 91–94 (NVST), 109–117 (KHGGRSVSS), and serine 121. Glycine 81 contributes to the anthranilate binding site. Residue serine 93 coordinates Mg(2+). Arginine 167 serves as a coordination point for anthranilate. Aspartate 226 and glutamate 227 together coordinate Mg(2+).

Belongs to the anthranilate phosphoribosyltransferase family. As to quaternary structure, homodimer. Requires Mg(2+) as cofactor.

The enzyme catalyses N-(5-phospho-beta-D-ribosyl)anthranilate + diphosphate = 5-phospho-alpha-D-ribose 1-diphosphate + anthranilate. Its pathway is amino-acid biosynthesis; L-tryptophan biosynthesis; L-tryptophan from chorismate: step 2/5. Functionally, catalyzes the transfer of the phosphoribosyl group of 5-phosphorylribose-1-pyrophosphate (PRPP) to anthranilate to yield N-(5'-phosphoribosyl)-anthranilate (PRA). This chain is Anthranilate phosphoribosyltransferase, found in Marinomonas sp. (strain MWYL1).